A 118-amino-acid polypeptide reads, in one-letter code: 5-hydroxyisourate hydrolase (118 aa).

Residues His-7, Arg-46, and Tyr-115 each contribute to the substrate site.

It belongs to the transthyretin family. 5-hydroxyisourate hydrolase subfamily. As to quaternary structure, homotetramer.

It catalyses the reaction 5-hydroxyisourate + H2O = 5-hydroxy-2-oxo-4-ureido-2,5-dihydro-1H-imidazole-5-carboxylate + H(+). Its function is as follows. Catalyzes the hydrolysis of 5-hydroxyisourate (HIU) to 2-oxo-4-hydroxy-4-carboxy-5-ureidoimidazoline (OHCU). The chain is 5-hydroxyisourate hydrolase from Brucella melitensis biotype 1 (strain ATCC 23456 / CCUG 17765 / NCTC 10094 / 16M).